Reading from the N-terminus, the 77-residue chain is Conotoxin CaHr91 (77 aa).

Positions 1–19 are cleaved as a signal peptide; sequence MKLTCALIITVLFLSITAD. Positions 20–43 are excised as a propeptide; that stretch reads DSRGKQGYRALKSIAGMLNSKTVR. 3 disulfides stabilise this stretch: C45–C60, C52–C65, and C59–C74.

This sequence belongs to the conotoxin O1 superfamily. In terms of tissue distribution, expressed by the venom duct.

The protein localises to the secreted. The protein is Conotoxin CaHr91 of Conus capitaneus (Captain cone).